Here is a 266-residue protein sequence, read N- to C-terminus: Large ribosomal subunit protein eL8 (266 aa).

Residues 1-11 (MPKGKKAKGKK) are compositionally biased toward basic residues. 2 disordered regions span residues 1–28 (MPKG…KKVV) and 105–134 (ETKQ…KRPP). Residues 116–130 (ARAEQKAAGKGDAPT) show a composition bias toward basic and acidic residues.

This sequence belongs to the eukaryotic ribosomal protein eL8 family. Component of the large ribosomal subunit.

Its subcellular location is the cytoplasm. In terms of biological role, component of the large ribosomal subunit. The ribosome is a large ribonucleoprotein complex responsible for the synthesis of proteins in the cell. The chain is Large ribosomal subunit protein eL8 (rpl7a) from Takifugu rubripes (Japanese pufferfish).